The primary structure comprises 403 residues: Heptahelical transmembrane protein ADIPOR3 (403 aa).

At 1–73 (MAAAAGEEVE…LSAFSIHNET (73 aa)) the chain is on the cytoplasmic side. A helical transmembrane segment spans residues 74–94 (LNVWTHLIGFFIFLVLTIYTA). Residues 95–209 (TQVPNVVDLQ…QLIRPIPRWP (115 aa)) are Extracellular-facing. Residues 210–230 (FYAFLGGAMFCLLASSTCHLL) form a helical membrane-spanning segment. Residues 231 to 246 (SCHSRRLAYIMLRLDY) are Cytoplasmic-facing. A helical transmembrane segment spans residues 247–267 (AGIAALIATSFYPPVYYSFMC). Residues 268-274 (YPFFCNL) are Extracellular-facing. Residues 275-295 (YLSCITILGVATIAFSLLPVF) form a helical membrane-spanning segment. Over 296–306 (QNPEFRTIRAC) the chain is Cytoplasmic. The helical transmembrane segment at 307 to 327 (LFFGMGASGVIPVIHKLILFW) threads the bilayer. Residues 328–331 (HQPE) are Extracellular-facing. A helical membrane pass occupies residues 332–352 (ALHTTAYEVLMGLFYGIGALV). The Cytoplasmic segment spans residues 353–374 (YATRVPERWMPGKFDIAGHSHQ). A helical membrane pass occupies residues 375–395 (LFHVLVVAGAYTHYHSGLVYL). At 396–403 (KWRDVQGC) the chain is on the extracellular side.

The protein belongs to the ADIPOR family.

Its subcellular location is the membrane. Its function is as follows. May play a role in abiotic stress response. This is Heptahelical transmembrane protein ADIPOR3 (ADIPOR3) from Oryza sativa subsp. japonica (Rice).